A 184-amino-acid chain; its full sequence is GTP cyclohydrolase 1 (184 aa).

Residues Cys75, His78, and Cys146 each coordinate Zn(2+).

It belongs to the GTP cyclohydrolase I family. In terms of assembly, toroid-shaped homodecamer, composed of two pentamers of five dimers.

The enzyme catalyses GTP + H2O = 7,8-dihydroneopterin 3'-triphosphate + formate + H(+). It participates in cofactor biosynthesis; 7,8-dihydroneopterin triphosphate biosynthesis; 7,8-dihydroneopterin triphosphate from GTP: step 1/1. The chain is GTP cyclohydrolase 1 from Streptococcus sanguinis (strain SK36).